A 517-amino-acid chain; its full sequence is tRNA-2-methylthio-N(6)-dimethylallyladenosine synthase (517 aa).

Positions 29-146 (RTYQVRTYGC…LPTLLERARH (118 aa)) constitute an MTTase N-terminal domain. C38, C75, C109, C183, C187, and C190 together coordinate [4Fe-4S] cluster. Residues 169–405 (RESAYAAWVS…VELQESISLQ (237 aa)) form the Radical SAM core domain. Residues 408–475 (QALVGQTVEL…PHHLIADAGV (68 aa)) enclose the TRAM domain.

Belongs to the methylthiotransferase family. MiaB subfamily. Monomer. [4Fe-4S] cluster serves as cofactor.

The protein localises to the cytoplasm. The enzyme catalyses N(6)-dimethylallyladenosine(37) in tRNA + (sulfur carrier)-SH + AH2 + 2 S-adenosyl-L-methionine = 2-methylsulfanyl-N(6)-dimethylallyladenosine(37) in tRNA + (sulfur carrier)-H + 5'-deoxyadenosine + L-methionine + A + S-adenosyl-L-homocysteine + 2 H(+). In terms of biological role, catalyzes the methylthiolation of N6-(dimethylallyl)adenosine (i(6)A), leading to the formation of 2-methylthio-N6-(dimethylallyl)adenosine (ms(2)i(6)A) at position 37 in tRNAs that read codons beginning with uridine. The protein is tRNA-2-methylthio-N(6)-dimethylallyladenosine synthase of Mycolicibacterium paratuberculosis (strain ATCC BAA-968 / K-10) (Mycobacterium paratuberculosis).